The sequence spans 563 residues: Efflux pump FUS6 (563 aa).

A disordered region spans residues 1 to 30; it reads MPQPDKMAAVNNAMPQPAPEKSLSSDPQPE. 5 consecutive transmembrane segments (helical) span residues 39-59, 75-95, 105-125, 138-158, and 167-187; these read WLIF…TSII, LYVW…PIFA, SLTL…GGAH, GIGG…MVSI, and IIGG…GAFA. N-linked (GlcNAc...) asparagine glycosylation is present at Asn-189. 3 helical membrane-spanning segments follow: residues 194–214, 233–253, and 261–281; these read WIFY…GLFL, WGGS…LSWG, and GWQT…FFAY. Residue Asn-299 is glycosylated (N-linked (GlcNAc...) asparagine). 6 consecutive transmembrane segments (helical) span residues 305-325, 340-360, 368-388, 401-421, 433-453, and 509-529; these read LLVI…FLPV, VMLF…GITI, VWHF…TLLD, ILFG…ILAS, AWTF…AAVF, and KVVW…CFFV. N-linked (GlcNAc...) asparagine glycosylation is present at Asn-553.

This sequence belongs to the major facilitator superfamily. TCR/Tet family.

The protein resides in the membrane. Functionally, efflux pump; part of the gene cluster that mediates the biosynthesis of the mycotoxin fusarin C. Within the cluster, FUS1, FUS2, FUS8 and FUS9 are sufficient for fusarin production. The other FUS cluster members are not essential for fusarin C biosynthesis. The chain is Efflux pump FUS6 from Gibberella moniliformis (strain M3125 / FGSC 7600) (Maize ear and stalk rot fungus).